A 516-amino-acid chain; its full sequence is uncharacterized protein (516 aa).

The tract at residues 1–35 (MAERTSESSSESASFDLEKQQSNHHDRYQSSVSSE) is disordered. The span at 16–28 (DLEKQQSNHHDRY) shows a compositional bias: basic and acidic residues. The residue at position 31 (serine 31) is a Phosphoserine. 12 consecutive transmembrane segments (helical) span residues 77 to 97 (VAVM…FSGA), 111 to 131 (VALL…VVWA), 143 to 163 (MIIA…AKDI), 166 to 186 (VMIC…TVAG), 198 to 218 (GLVI…SPIV), 231 to 251 (WTSY…IIFH), 301 to 321 (LLIF…VYGI), 345 to 365 (SLPY…VALF), 386 to 406 (LPSM…LAWT), 412 to 432 (IHWI…ITIF), 439 to 461 (IIDC…RSSF), and 481 to 501 (AGSL…MLFL).

This sequence belongs to the major facilitator superfamily.

The protein resides in the membrane. This is an uncharacterized protein from Schizosaccharomyces pombe (strain 972 / ATCC 24843) (Fission yeast).